The chain runs to 102 residues: Large ribosomal subunit protein bL21 (102 aa).

Belongs to the bacterial ribosomal protein bL21 family. Part of the 50S ribosomal subunit. Contacts protein L20.

Functionally, this protein binds to 23S rRNA in the presence of protein L20. The polypeptide is Large ribosomal subunit protein bL21 (Exiguobacterium sp. (strain ATCC BAA-1283 / AT1b)).